A 627-amino-acid polypeptide reads, in one-letter code: Serine/threonine-protein phosphatase 2A 56 kDa regulatory subunit delta 2 isoform (627 aa).

The disordered stretch occupies residues 1 to 37 (MKGLRSKFVKALSLKDEQGSHKNGHSKSHYISKNGSY).

The protein belongs to the phosphatase 2A regulatory subunit B family. As to quaternary structure, PP2A consists of a common heterodimeric core enzyme, composed of a 36 kDa catalytic subunit (subunit C) and a 65 kDa constant regulatory subunit (PR65 or subunit A), that associates with a variety of regulatory subunits. Proteins that associate with the core dimer include three families of regulatory subunits B (the R2/B/PR55/B55, R3/B''/PR72/PR130/PR59 and R5/B'/B56 families), the 48 kDa variable regulatory subunit, viral proteins, and cell signaling molecules.

The protein resides in the cytoplasm. Its subcellular location is the cell tip. In terms of biological role, the B regulatory subunit might modulate substrate selectivity and catalytic activity, and might also direct the localization of the catalytic enzyme to a particular subcellular compartment. Has a role in cell shape control and septum formation. The protein is Serine/threonine-protein phosphatase 2A 56 kDa regulatory subunit delta 2 isoform (par2) of Schizosaccharomyces pombe (strain 972 / ATCC 24843) (Fission yeast).